Reading from the N-terminus, the 246-residue chain is 3-deoxy-manno-octulosonate cytidylyltransferase (246 aa).

The protein belongs to the KdsB family. As to quaternary structure, homodimer.

The protein resides in the cytoplasm. It carries out the reaction 3-deoxy-alpha-D-manno-oct-2-ulosonate + CTP = CMP-3-deoxy-beta-D-manno-octulosonate + diphosphate. The protein operates within nucleotide-sugar biosynthesis; CMP-3-deoxy-D-manno-octulosonate biosynthesis; CMP-3-deoxy-D-manno-octulosonate from 3-deoxy-D-manno-octulosonate and CTP: step 1/1. Its pathway is bacterial outer membrane biogenesis; lipopolysaccharide biosynthesis. Activates KDO (a required 8-carbon sugar) for incorporation into bacterial lipopolysaccharide in Gram-negative bacteria. The sequence is that of 3-deoxy-manno-octulosonate cytidylyltransferase (kpsU) from Escherichia coli.